The following is a 161-amino-acid chain: Lipoprotein LpqH (161 aa).

A signal peptide spans 1–21 (MNRQLRFAVAGPEILAAVVSG). A compositionally biased stretch (low complexity) spans 21–46 (GCSSGNKSAPSSSASSSSTSPSASSG). The interval 21–49 (GCSSGNKSAPSSSASSSSTSPSASSGGAA) is disordered. The N-palmitoyl cysteine moiety is linked to residue cysteine 22. Cysteine 22 is lipidated: S-diacylglycerol cysteine.

Belongs to the mycobacterial 19 kDa antigen family. Modified by Lgt on Cys-22 with an S-linked diacylglycerol with a mixture of C16, C18 and C19 fatty acids, signal peptide is removed by LspA, modifed by Lnt with an amide-linked mixture of C16 and C19 fatty acids.

The protein resides in the cell membrane. Might be involved in ligand transport. A host TLR2 agonist, modifies host gene expression in response to pathogen. The polypeptide is Lipoprotein LpqH (lpqH) (Mycobacterium avium).